Reading from the N-terminus, the 440-residue chain is Serine hydroxymethyltransferase (440 aa).

(6S)-5,6,7,8-tetrahydrofolate is bound by residues Leu119 and 123 to 125 (GHL). Lys228 bears the N6-(pyridoxal phosphate)lysine mark. 370–372 (SPF) lines the (6S)-5,6,7,8-tetrahydrofolate pocket.

It belongs to the SHMT family. As to quaternary structure, homodimer. The cofactor is pyridoxal 5'-phosphate.

It is found in the cytoplasm. It catalyses the reaction (6R)-5,10-methylene-5,6,7,8-tetrahydrofolate + glycine + H2O = (6S)-5,6,7,8-tetrahydrofolate + L-serine. The protein operates within one-carbon metabolism; tetrahydrofolate interconversion. It functions in the pathway amino-acid biosynthesis; glycine biosynthesis; glycine from L-serine: step 1/1. In terms of biological role, catalyzes the reversible interconversion of serine and glycine with tetrahydrofolate (THF) serving as the one-carbon carrier. This reaction serves as the major source of one-carbon groups required for the biosynthesis of purines, thymidylate, methionine, and other important biomolecules. Also exhibits THF-independent aldolase activity toward beta-hydroxyamino acids, producing glycine and aldehydes, via a retro-aldol mechanism. The protein is Serine hydroxymethyltransferase of Chloroherpeton thalassium (strain ATCC 35110 / GB-78).